The chain runs to 473 residues: MGRLVVVSNRIAPPDNKGGAGGLAVGVLGALKAAGGLWFGWSGETGNEDKPLKKVTRGNMTWASFNLSEQDYEEYYCQFSNAVLWPAFHYRLDLVQFQRPAWEGYSRVNALLADKLLPLLKDDDIIWVHDYHLLPFASELRKRGVNNRIGFFLHIPFPTPEIFNALPPHDTLLEQLCDFDLLGFQTENDRLAFLDSLSSQTRVTTRGSKSHSAWGKSFRTEVYPIGIEPDEIAQQASGPLPPKLAQLKAELKNVQNIFSVERLDYSKGLPERFQAYEALLEKYPQHHGKIRYTQIAPTSRGEVQAYQDIRHQLETEAGRINGKYGQLGWTPLYYLNQHFDRKLLMKVFRYSDVGLVTPLRDGMNLVAKEFVAAQDPANPGVLVLSQFAGAANELTSALIVNPYDRDDVAVALHRALTMPLAERISRHAEMLETIIKNDINHWQQRFIRDLKDVAPRSAETLHRNKVATFPKLA.

Residue Arg-10 coordinates D-glucose 6-phosphate. 21–22 (GG) contributes to the UDP-alpha-D-glucose binding site. Tyr-76 and Asp-130 together coordinate D-glucose 6-phosphate. Residues Arg-262 and Lys-267 each contribute to the UDP-alpha-D-glucose site. Residue Arg-300 coordinates D-glucose 6-phosphate. UDP-alpha-D-glucose is bound by residues Phe-339 and 365 to 369 (LVAKE).

The protein belongs to the glycosyltransferase 20 family. Homotetramer.

It carries out the reaction D-glucose 6-phosphate + UDP-alpha-D-glucose = alpha,alpha-trehalose 6-phosphate + UDP + H(+). The protein operates within glycan biosynthesis; trehalose biosynthesis. In terms of biological role, probably involved in the osmoprotection via the biosynthesis of trehalose. Catalyzes the transfer of glucose from UDP-alpha-D-glucose (UDP-Glc) to D-glucose 6-phosphate (Glc-6-P) to form trehalose-6-phosphate. Acts with retention of the anomeric configuration of the UDP-sugar donor. This is Trehalose-6-phosphate synthase from Citrobacter koseri (strain ATCC BAA-895 / CDC 4225-83 / SGSC4696).